Consider the following 186-residue polypeptide: Mitochondrial import inner membrane translocase subunit Tim22 (186 aa).

2 disulfides stabilise this stretch: cysteine 61/cysteine 133 and cysteine 152/cysteine 171. Helical transmembrane passes span 66–86, 117–135, and 162–182; these read ALACVGGFVLGGAFGVFTAGI, YAKNFAIVGAMFSCTECLV, and AGLKAGALGCGGFAAFSAVID.

This sequence belongs to the Tim17/Tim22/Tim23 family. As to quaternary structure, core component of the TIM22 complex.

Its subcellular location is the mitochondrion inner membrane. Functionally, essential core component of the TIM22 complex, a complex that mediates the import and insertion of multi-pass transmembrane proteins into the mitochondrial inner membrane. In the TIM22 complex, it constitutes the voltage-activated and signal-gated channel. Forms a twin-pore translocase that uses the membrane potential as external driving force in 2 voltage-dependent steps. This is Mitochondrial import inner membrane translocase subunit Tim22 (timm22) from Xenopus tropicalis (Western clawed frog).